The chain runs to 186 residues: Interferon beta (186 aa).

The first 21 residues, 1 to 21 (MTYRWILPMALLLCFSTTALS), serve as a signal peptide directing secretion. Tyr-24 is subject to Phosphotyrosine. An intrachain disulfide couples Cys-52 to Cys-161. 2 N-linked (GlcNAc...) asparagine glycosylation sites follow: Asn-101 and Asn-136.

This sequence belongs to the alpha/beta interferon family. In terms of assembly, monomer.

Its subcellular location is the secreted. Type I interferon cytokine that plays a key role in the innate immune response to infection, developing tumors and other inflammatory stimuli. Signals via binding to high-affinity (IFNAR2) and low-affinity (IFNAR1) heterodimeric receptor, activating the canonical Jak-STAT signaling pathway resulting in transcriptional activation or repression of interferon-regulated genes that encode the effectors of the interferon response, such as antiviral proteins, regulators of cell proliferation and differentiation, and immunoregulatory proteins. Signals mostly via binding to a IFNAR1-IFNAR2 heterodimeric receptor, but can also function with IFNAR1 alone and independently of Jak-STAT pathways. Elicits a wide variety of responses, including antiviral and antibacterial activities, and can regulate the development of B-cells, myelopoiesis and lipopolysaccharide (LPS)-inducible production of tumor necrosis factor. Plays a role in neuronal homeostasis by regulating dopamine turnover and protecting dopaminergic neurons: acts by promoting neuronal autophagy and alpha-synuclein clearance, thereby preventing dopaminergic neuron loss. IFNB1 is more potent than interferon-alpha (IFN-alpha) in inducing the apoptotic and antiproliferative pathways required for control of tumor cell growth. In Equus caballus (Horse), this protein is Interferon beta (IFNB1).